The sequence spans 247 residues: MLELGKLLTALIAPPLNTFVLLIIAAIIYCVHFKKLAKFIAIISFTWLYIMSAPFTGLLLTNNDDSPALTLDEYKQAQAIVILGGGSYQTKELYAETASGAPQLERLRYAAFLQKETGLPILTTGYSLIGISEGDLMAKELNQFFNVPTQWIENKARNTEENASFTKNILIKDHIQKIILVTNQWHMKRAKYLFEKQGFDVLPAAAASYGSKGNLSAKSFIPDLGALNSNMVLLKEWIGYWKAHYVE.

Helical transmembrane passes span Leu11 to Val31 and Phe39 to Leu59.

The protein resides in the cell membrane. This is an uncharacterized protein from Haemophilus influenzae (strain ATCC 51907 / DSM 11121 / KW20 / Rd).